A 182-amino-acid polypeptide reads, in one-letter code: Homeobox expressed in ES cells 1-A (182 aa).

A DNA-binding region (homeobox) is located at residues 103-163; that stretch reads YRGRRPRTAF…QNRRAKLKRS (61 aa).

Belongs to the ANF homeobox family. Initially expressed in the anterior dorsal region of early embryos and later exclusively in the primordium of the anterior pituitary gland.

The protein localises to the nucleus. Functionally, appears to be involved in the regional specification of the anterior head of Xenopus embryos. This Xenopus laevis (African clawed frog) protein is Homeobox expressed in ES cells 1-A (hesx1-a).